Reading from the N-terminus, the 694-residue chain is DNA ligase (694 aa).

NAD(+)-binding positions include Asp-41–Asp-45, Ser-91–Leu-92, and Glu-121. Lys-123 functions as the N6-AMP-lysine intermediate in the catalytic mechanism. Positions 144, 184, 300, and 324 each coordinate NAD(+). Zn(2+) contacts are provided by Cys-418, Cys-421, Cys-437, and Cys-443. The BRCT domain maps to Ser-607–Asp-694.

This sequence belongs to the NAD-dependent DNA ligase family. LigA subfamily. Requires Mg(2+) as cofactor. The cofactor is Mn(2+).

The catalysed reaction is NAD(+) + (deoxyribonucleotide)n-3'-hydroxyl + 5'-phospho-(deoxyribonucleotide)m = (deoxyribonucleotide)n+m + AMP + beta-nicotinamide D-nucleotide.. In terms of biological role, DNA ligase that catalyzes the formation of phosphodiester linkages between 5'-phosphoryl and 3'-hydroxyl groups in double-stranded DNA using NAD as a coenzyme and as the energy source for the reaction. It is essential for DNA replication and repair of damaged DNA. The polypeptide is DNA ligase (Mycobacterium leprae (strain TN)).